The following is a 286-amino-acid chain: Cbb3-type cytochrome c oxidase subunit CcoP (286 aa).

Helical transmembrane passes span 11 to 31 (FGLIAALVILVLTIYESSSLI) and 62 to 82 (VGWIASFMCTIVWAFWYFFFG). Cytochrome c domains lie at 116–195 (ELVD…MAEL) and 205–286 (QLID…LSNR). Cys-129, Cys-132, His-133, Met-174, Cys-219, Cys-222, His-223, and Met-264 together coordinate heme c.

The protein belongs to the CcoP / FixP family. In terms of assembly, component of the cbb3-type cytochrome c oxidase at least composed of CcoN, CcoO, CcoQ and CcoP. The cofactor is heme c.

The protein localises to the cell inner membrane. It functions in the pathway energy metabolism; oxidative phosphorylation. C-type cytochrome. Part of the cbb3-type cytochrome c oxidase complex. CcoP subunit is required for transferring electrons from donor cytochrome c via its heme groups to CcoO subunit. From there, electrons are shuttled to the catalytic binuclear center of CcoN subunit where oxygen reduction takes place. The complex also functions as a proton pump. The sequence is that of Cbb3-type cytochrome c oxidase subunit CcoP from Helicobacter pylori (strain ATCC 700392 / 26695) (Campylobacter pylori).